Reading from the N-terminus, the 379-residue chain is MDLARDPTGAEIAKFIATRTGAQMVQLMRCIKEPAAQAAFTAKLLVASPAVSGQPATPEKARKALNAFVGFRCYYITIPMFKPWPMKKLSNLIGLLWEADPNKSLWSLMAKAWSTIRDQIGKDQAPLNQFFRIICPHLKLPDPASYLEIHGWILNVNEEGDPTISRSADSEFASIGTGNTDMTLSVEDIITYVQSLGYAHGFILDDNKPSSTFLGHSVSSTLEKNTSAISATQATSKAAHARFLVRNKRRAKRQAVRNASYRASLDQDILIAHQLDPAPVDNHVPDCYSTTAPVLNQSPNQFYDGLTTLLSDQIPTIQDDAGHLDNAHLFNDCSLPGDVSFMNIDDFTTNMPNLIDYDAFRLGADEDVTLPIFDDITQI.

The alpha box DNA-binding region spans 60-117 (KARKALNAFVGFRCYYITIPMFKPWPMKKLSNLIGLLWEADPNKSLWSLMAKAWSTIR).

The protein belongs to the MATALPHA1 family.

Its subcellular location is the nucleus. Mating type proteins are sequence specific DNA-binding proteins that act as master switches in fungal differentiation by controlling gene expression in a cell type-specific fashion. Transcriptional activator that induces the transcription of alpha-specific genes. The sequence is that of Mating-type protein MAT-1 (MAT1) from Cochliobolus carbonum (strain 26-R-13) (Maize leaf spot fungus).